Reading from the N-terminus, the 470-residue chain is Velvet complex subunit B (470 aa).

Disordered regions lie at residues 1-148 and 223-321; these read MNSS…EEGT and VRSS…NPLF. The span at 15–37 shows a compositional bias: low complexity; sequence PGPGYSSSVPPPIHAYQQQQQHQ. Residues 38–49 show a composition bias toward pro residues; it reads HPPPSLLPPPPT. Positions 74 to 86 are enriched in basic residues; sequence HQHHAPPPPHHHS. Pro residues predominate over residues 102 to 124; it reads NQYPRPHPLPPSRNDEPPPPSSE. Positions 147-452 constitute a Velvet domain; sequence GTGLKYSLDV…ALQGIKIPIR (306 aa). Residues 232-241 show a composition bias toward low complexity; the sequence is GASSNNYSYS. Positions 242-255 are enriched in polar residues; it reads TLEPSTPSYQQQAL. Residues 280–301 are compositionally biased toward low complexity; it reads QQGYGQAPSYQSSSSYGPPQQY. Polar residues predominate over residues 307 to 318; that stretch reads GYNTDPPASSAN.

Belongs to the velvet family. VelB subfamily. As to quaternary structure, component of the heterotrimeric velvet complex composed of laeA, veA and velB; VeA acting as a bridging protein between laeA and velB. Forms a heterodimeric complex with vosA; the formation of the velB-vosA complex is light-dependent.

The protein resides in the nucleus. It localises to the cytoplasm. Its function is as follows. Component of the velvet transcription factor complex that controls sexual/asexual developmental ratio in response to light, promoting sexual development in the darkness while stimulating asexual sporulation under illumination. The velvet complex acts as a global regulator for secondary metabolite gene expression. Component of the velB-VosA heterodimeric complex that plays a dual role in activating genes associated with spore maturation and repressing certain development-associated genes. The complex binds DNA through the DNA-binding domain of vosA that recognizes an 11-nucleotide consensus sequence 5'-CTGGCCGCGGC-3' consisting of two motifs in the promoters of key developmental regulatory genes. Controls the expression of the pink pigment aurofusarin and the mycotoxin deoxynivalenol gene clusters. Regulates hyphae formation, hyphal hydrophobicity and conidiation. Regulates of cell wall integrity and pathogenicity. The chain is Velvet complex subunit B from Gibberella zeae (strain ATCC MYA-4620 / CBS 123657 / FGSC 9075 / NRRL 31084 / PH-1) (Wheat head blight fungus).